The sequence spans 189 residues: Putative manganese efflux pump MntP (189 aa).

The next 6 membrane-spanning stretches (helical) occupy residues 3-23 (LSAT…ASIG), 41-61 (LIFG…GLFA), 65-85 (IMEW…MRMI), 103-123 (GFWL…AIGV), 132-152 (IVHT…LGMM), and 167-187 (ILGG…HLGY).

The protein belongs to the MntP (TC 9.B.29) family.

It is found in the cell inner membrane. In terms of biological role, probably functions as a manganese efflux pump. In Serratia proteamaculans (strain 568), this protein is Putative manganese efflux pump MntP.